Reading from the N-terminus, the 541-residue chain is FAD-linked oxidoreductase pynB (541 aa).

The N-terminal stretch at 1–20 (MRLSARGFVWSALLACTASA) is a signal peptide. N-linked (GlcNAc...) asparagine glycosylation is found at Asn-30, Asn-57, Asn-117, Asn-131, Asn-158, Asn-253, Asn-306, Asn-343, Asn-430, and Asn-461. The 172-residue stretch at 71-242 (FNEFPALIAY…VDFDLQLMQF (172 aa)) folds into the FAD-binding PCMH-type domain.

The protein belongs to the oxygen-dependent FAD-linked oxidoreductase family. FAD is required as a cofactor.

The protein operates within secondary metabolite biosynthesis. Functionally, FAD-linked oxidoreductase; part of the gene cluster that mediates the biosynthesis of pyranonigrins, a family of antioxidative compounds. The first step of pyranonigrins biosynthesis is performed by the hybrid PKS-NRPS synthetase that condenses 6 malonyl-CoA units to an acetyl starter unit, to form a 1,3,5-trioxotetradecane-6,8-dienyl-ACP. The enoyl reductase (ER) domain of pynA is likely to be functional during the first two rounds of polyketide chain extension, to generate the saturated C-C bonds of the alkyl side chain. PynA subsequently forms the amide bond between the acyl chain and L-serine. Although pynA has a terminal reductase domain, it appears to require the thioesterase pynI for the release of the straight-chain intermediate from pynA via the formation of a tetramic acid pyranonigrin J. The methyltransferase pynC then coverts pyranonigrin J to pyranonigrin I via N-methylation. The FAD-dependent monooxygenase pynG catalyzes an epoxidation-mediated cyclization to form the dihydro-gamma-pyrone moiety, followed by pynD-catalyzed oxidation of the alcohol to the ketone and enolization to yield the characteristic tetramic acid-fused gamma-pyrone core of pyranonigrin H. Pyranonigrin H is substrate of pynH for dehydration-mediated exo-methylene formation from the serine side chain to produce pyranonigrin E, before the oxidase pynE reduces the exo-methylene of pyranonigrin E into a pendant methyl to form pyranonigrin G. The FAD-linked oxidoreductase pynB performs the reverse reaction and converts pyranonigrin G back to pyranonigrin E. The chain is FAD-linked oxidoreductase pynB from Aspergillus niger (strain ATCC MYA-4892 / CBS 513.88 / FGSC A1513).